Here is a 93-residue protein sequence, read N- to C-terminus: Pyrimidine/purine nucleoside phosphorylase (93 aa).

Belongs to the nucleoside phosphorylase PpnP family.

The enzyme catalyses a purine D-ribonucleoside + phosphate = a purine nucleobase + alpha-D-ribose 1-phosphate. It carries out the reaction adenosine + phosphate = alpha-D-ribose 1-phosphate + adenine. It catalyses the reaction cytidine + phosphate = cytosine + alpha-D-ribose 1-phosphate. The catalysed reaction is guanosine + phosphate = alpha-D-ribose 1-phosphate + guanine. The enzyme catalyses inosine + phosphate = alpha-D-ribose 1-phosphate + hypoxanthine. It carries out the reaction thymidine + phosphate = 2-deoxy-alpha-D-ribose 1-phosphate + thymine. It catalyses the reaction uridine + phosphate = alpha-D-ribose 1-phosphate + uracil. The catalysed reaction is xanthosine + phosphate = alpha-D-ribose 1-phosphate + xanthine. Functionally, catalyzes the phosphorolysis of diverse nucleosides, yielding D-ribose 1-phosphate and the respective free bases. Can use uridine, adenosine, guanosine, cytidine, thymidine, inosine and xanthosine as substrates. Also catalyzes the reverse reactions. The chain is Pyrimidine/purine nucleoside phosphorylase from Aliivibrio salmonicida (strain LFI1238) (Vibrio salmonicida (strain LFI1238)).